The chain runs to 508 residues: Photosystem II CP47 reaction center protein (508 aa).

The next 6 membrane-spanning stretches (helical) occupy residues 21-36 (AVHI…WAGS), 101-115 (IVFS…IWHW), 140-156 (GIHL…FGAF), 203-218 (IAAG…FHLS), 237-252 (VLSS…AFVV), and 457-472 (SFAL…HGAR).

Belongs to the PsbB/PsbC family. PsbB subfamily. PSII is composed of 1 copy each of membrane proteins PsbA, PsbB, PsbC, PsbD, PsbE, PsbF, PsbH, PsbI, PsbJ, PsbK, PsbL, PsbM, PsbT, PsbX, PsbY, PsbZ, Psb30/Ycf12, at least 3 peripheral proteins of the oxygen-evolving complex and a large number of cofactors. It forms dimeric complexes. It depends on Binds multiple chlorophylls. PSII binds additional chlorophylls, carotenoids and specific lipids. as a cofactor.

It is found in the plastid. It localises to the chloroplast thylakoid membrane. Functionally, one of the components of the core complex of photosystem II (PSII). It binds chlorophyll and helps catalyze the primary light-induced photochemical processes of PSII. PSII is a light-driven water:plastoquinone oxidoreductase, using light energy to abstract electrons from H(2)O, generating O(2) and a proton gradient subsequently used for ATP formation. This is Photosystem II CP47 reaction center protein from Daucus carota (Wild carrot).